Consider the following 350-residue polypeptide: Holliday junction branch migration complex subunit RuvB (350 aa).

Residues 1–183 are large ATPase domain (RuvB-L); it reads MSAERLVNPH…FVAVHRLVFY (183 aa). Residues Leu22, Arg23, Gly64, Lys67, Thr68, Ser69, 130 to 132, Arg173, Tyr183, and Arg220 each bind ATP; that span reads EDF. Residue Thr68 coordinates Mg(2+). Residues 184–254 are small ATPAse domain (RuvB-S); the sequence is SDAAMTEIVS…VAREALAQLE (71 aa). Residues 257–350 are head domain (RuvB-H); sequence ELGLDENDRR…ESGPQQGTLF (94 aa). DNA-binding residues include Arg312 and Arg317.

Belongs to the RuvB family. Homohexamer. Forms an RuvA(8)-RuvB(12)-Holliday junction (HJ) complex. HJ DNA is sandwiched between 2 RuvA tetramers; dsDNA enters through RuvA and exits via RuvB. An RuvB hexamer assembles on each DNA strand where it exits the tetramer. Each RuvB hexamer is contacted by two RuvA subunits (via domain III) on 2 adjacent RuvB subunits; this complex drives branch migration. In the full resolvosome a probable DNA-RuvA(4)-RuvB(12)-RuvC(2) complex forms which resolves the HJ.

It is found in the cytoplasm. It catalyses the reaction ATP + H2O = ADP + phosphate + H(+). In terms of biological role, the RuvA-RuvB-RuvC complex processes Holliday junction (HJ) DNA during genetic recombination and DNA repair, while the RuvA-RuvB complex plays an important role in the rescue of blocked DNA replication forks via replication fork reversal (RFR). RuvA specifically binds to HJ cruciform DNA, conferring on it an open structure. The RuvB hexamer acts as an ATP-dependent pump, pulling dsDNA into and through the RuvAB complex. RuvB forms 2 homohexamers on either side of HJ DNA bound by 1 or 2 RuvA tetramers; 4 subunits per hexamer contact DNA at a time. Coordinated motions by a converter formed by DNA-disengaged RuvB subunits stimulates ATP hydrolysis and nucleotide exchange. Immobilization of the converter enables RuvB to convert the ATP-contained energy into a lever motion, pulling 2 nucleotides of DNA out of the RuvA tetramer per ATP hydrolyzed, thus driving DNA branch migration. The RuvB motors rotate together with the DNA substrate, which together with the progressing nucleotide cycle form the mechanistic basis for DNA recombination by continuous HJ branch migration. Branch migration allows RuvC to scan DNA until it finds its consensus sequence, where it cleaves and resolves cruciform DNA. This is Holliday junction branch migration complex subunit RuvB from Chloroflexus aggregans (strain MD-66 / DSM 9485).